We begin with the raw amino-acid sequence, 693 residues long: Glycine--tRNA ligase beta subunit (693 aa).

Belongs to the class-II aminoacyl-tRNA synthetase family. Tetramer of two alpha and two beta subunits.

It is found in the cytoplasm. It carries out the reaction tRNA(Gly) + glycine + ATP = glycyl-tRNA(Gly) + AMP + diphosphate. This is Glycine--tRNA ligase beta subunit from Ligilactobacillus salivarius (strain UCC118) (Lactobacillus salivarius).